Reading from the N-terminus, the 214-residue chain is Adenylate kinase (214 aa).

Residue glycine 10–threonine 15 coordinates ATP. Positions serine 30–valine 59 are NMP. Residues threonine 31, arginine 36, lysine 57–valine 59, glycine 85–arginine 88, and glutamine 92 contribute to the AMP site. An LID region spans residues glycine 122–aspartate 159. ATP is bound by residues arginine 123 and valine 132–tyrosine 133. AMP contacts are provided by arginine 156 and arginine 167. Arginine 200 is an ATP binding site.

This sequence belongs to the adenylate kinase family. In terms of assembly, monomer.

The protein localises to the cytoplasm. The catalysed reaction is AMP + ATP = 2 ADP. It participates in purine metabolism; AMP biosynthesis via salvage pathway; AMP from ADP: step 1/1. Its function is as follows. Catalyzes the reversible transfer of the terminal phosphate group between ATP and AMP. Plays an important role in cellular energy homeostasis and in adenine nucleotide metabolism. The polypeptide is Adenylate kinase (Yersinia pseudotuberculosis serotype O:1b (strain IP 31758)).